The sequence spans 426 residues: Histidine--tRNA ligase (426 aa).

This sequence belongs to the class-II aminoacyl-tRNA synthetase family. In terms of assembly, homodimer.

The protein localises to the cytoplasm. The enzyme catalyses tRNA(His) + L-histidine + ATP = L-histidyl-tRNA(His) + AMP + diphosphate + H(+). In Microcystis aeruginosa (strain NIES-843 / IAM M-2473), this protein is Histidine--tRNA ligase.